Here is a 295-residue protein sequence, read N- to C-terminus: Acetylglutamate kinase (295 aa).

Residues glycine 67–glycine 68, arginine 89, and asparagine 191 each bind substrate.

Belongs to the acetylglutamate kinase family. ArgB subfamily.

The protein localises to the cytoplasm. The enzyme catalyses N-acetyl-L-glutamate + ATP = N-acetyl-L-glutamyl 5-phosphate + ADP. It participates in amino-acid biosynthesis; L-arginine biosynthesis; N(2)-acetyl-L-ornithine from L-glutamate: step 2/4. In terms of biological role, catalyzes the ATP-dependent phosphorylation of N-acetyl-L-glutamate. In Nitrosomonas eutropha (strain DSM 101675 / C91 / Nm57), this protein is Acetylglutamate kinase.